The primary structure comprises 42 residues: Potassium channel toxin gamma-KTx 3.4 (42 aa).

4 disulfides stabilise this stretch: cysteine 5-cysteine 23, cysteine 11-cysteine 34, cysteine 20-cysteine 39, and cysteine 24-cysteine 41.

The protein belongs to the ergtoxin family. Gamma-KTx 3 subfamily. As to expression, expressed by the venom gland.

It is found in the secreted. In terms of biological role, blocks Kv11/ERG potassium channels. The protein is Potassium channel toxin gamma-KTx 3.4 of Centruroides gracilis (Slenderbrown scorpion).